The primary structure comprises 500 residues: Cytochrome P450 2C11 (500 aa).

Cys-435 provides a ligand contact to heme.

Belongs to the cytochrome P450 family. Heme is required as a cofactor. As to expression, liver and kidney; male-specific.

It is found in the endoplasmic reticulum membrane. The protein resides in the microsome membrane. The catalysed reaction is an organic molecule + reduced [NADPH--hemoprotein reductase] + O2 = an alcohol + oxidized [NADPH--hemoprotein reductase] + H2O + H(+). It catalyses the reaction testosterone + reduced [NADPH--hemoprotein reductase] + O2 = 2alpha,17beta-dihydroxyandrost-4-en-3-one + oxidized [NADPH--hemoprotein reductase] + H2O + H(+). It carries out the reaction testosterone + reduced [NADPH--hemoprotein reductase] + O2 = 16alpha,17beta-dihydroxyandrost-4-en-3-one + oxidized [NADPH--hemoprotein reductase] + H2O + H(+). The enzyme catalyses (5Z,8Z,11Z,14Z)-eicosatetraenoate + reduced [NADPH--hemoprotein reductase] + O2 = (8R,9S)-epoxy-(5Z,11Z,14Z)-eicosatrienoate + oxidized [NADPH--hemoprotein reductase] + H2O + H(+). The catalysed reaction is (5Z,8Z,11Z,14Z)-eicosatetraenoate + reduced [NADPH--hemoprotein reductase] + O2 = (8S,9R)-epoxy-(5Z,11Z,14Z)-eicosatrienoate + oxidized [NADPH--hemoprotein reductase] + H2O + H(+). It catalyses the reaction (5Z,8Z,11Z,14Z)-eicosatetraenoate + reduced [NADPH--hemoprotein reductase] + O2 = (11R,12S)-epoxy-(5Z,8Z,14Z)-eicosatrienoate + oxidized [NADPH--hemoprotein reductase] + H2O + H(+). It carries out the reaction (5Z,8Z,11Z,14Z)-eicosatetraenoate + reduced [NADPH--hemoprotein reductase] + O2 = (11S,12R)-epoxy-(5Z,8Z,14Z)-eicosatrienoate + oxidized [NADPH--hemoprotein reductase] + H2O + H(+). The enzyme catalyses (5Z,8Z,11Z,14Z)-eicosatetraenoate + reduced [NADPH--hemoprotein reductase] + O2 = (14R,15S)-epoxy-(5Z,8Z,11Z)-eicosatrienoate + oxidized [NADPH--hemoprotein reductase] + H2O + H(+). The catalysed reaction is (5Z,8Z,11Z,14Z)-eicosatetraenoate + reduced [NADPH--hemoprotein reductase] + O2 = (14S,15R)-epoxy-(5Z,8Z,11Z)-eicosatrienoate + oxidized [NADPH--hemoprotein reductase] + H2O + H(+). It catalyses the reaction (5Z,8Z,11Z,14Z,17Z)-eicosapentaenoate + reduced [NADPH--hemoprotein reductase] + O2 = 8,9-epoxy-(5Z,11Z,14Z,17Z)-eicosatetraenoate + oxidized [NADPH--hemoprotein reductase] + H2O + H(+). It carries out the reaction (5Z,8Z,11Z,14Z,17Z)-eicosapentaenoate + reduced [NADPH--hemoprotein reductase] + O2 = 11,12-epoxy-(5Z,8Z,14Z,17Z)-eicosatetraenoate + oxidized [NADPH--hemoprotein reductase] + H2O + H(+). The enzyme catalyses (5Z,8Z,11Z,14Z,17Z)-eicosapentaenoate + reduced [NADPH--hemoprotein reductase] + O2 = 14,15-epoxy-(5Z,8Z,11Z,17Z)-eicosatetraenoate + oxidized [NADPH--hemoprotein reductase] + H2O + H(+). The catalysed reaction is (5Z,8Z,11Z,14Z,17Z)-eicosapentaenoate + reduced [NADPH--hemoprotein reductase] + O2 = (17S,18R)-epoxy-(5Z,8Z,11Z,14Z)-eicosatetraenoate + oxidized [NADPH--hemoprotein reductase] + H2O + H(+). It catalyses the reaction (5Z,8Z,11Z,14Z,17Z)-eicosapentaenoate + reduced [NADPH--hemoprotein reductase] + O2 = (17R,18S)-epoxy-(5Z,8Z,11Z,14Z)-eicosatetraenoate + oxidized [NADPH--hemoprotein reductase] + H2O + H(+). Its pathway is lipid metabolism; arachidonate metabolism. The protein operates within steroid metabolism. Functionally, a cytochrome P450 monooxygenase involved in the metabolism of steroid hormones and fatty acids. Catalyzes the hydroxylation of carbon-hydrogen bonds. Metabolizes testosterone to 2alpha- and 16alpha-hydroxytestosterone. Catalyzes the epoxidation of double bonds of polyunsaturated fatty acids (PUFAs). Converts arachidonic acid (ARA, C20:4(n-6)) primarily to epoxyeicosatrienoic acid (EET) regioisomers, 8,9-, 11,12-, and 14,15-EET, with both R,S and S,R stereochemistry. Preferentially produces 11R,12S-EET enantiomer. To a lesser extent, catalyzes the hydroxylation of arachidonic acid producing hydroxyeicosatetraenoates (HETEs). Metabolizes eicosapentaenoic acid (EPA, C20:5(n-3)) to epoxyeicosatetraenoic acid (EETeTr) regioisomers, 8,9-, 11,12-, 14,15-, and 17,18-EETeTr, preferentially producing 17R,18S-EETeTr enantiomer. Mechanistically, uses molecular oxygen inserting one oxygen atom into a substrate, and reducing the second into a water molecule, with two electrons provided by NADPH via cytochrome P450 reductase (NADPH--hemoprotein reductase). This chain is Cytochrome P450 2C11 (Cyp2c11), found in Rattus norvegicus (Rat).